A 452-amino-acid polypeptide reads, in one-letter code: uncharacterized protein (452 aa).

72–79 (GPPGSGKT) contacts ATP.

The protein belongs to the AAA ATPase family. RarA/MGS1/WRNIP1 subfamily.

This is an uncharacterized protein from Mycobacterium tuberculosis (strain ATCC 25618 / H37Rv).